Here is a 148-residue protein sequence, read N- to C-terminus: Histone H2A-like 3 (148 aa).

Positions 101–128 (DDTHSQVEEMPQSEEEEEEEEEKEEEMV) are disordered. Positions 111–127 (PQSEEEEEEEEEKEEEM) are enriched in acidic residues.

Belongs to the histone H2A family. As to quaternary structure, the nucleosome is a histone octamer containing two molecules each of H2A, H2B, H3 and H4 assembled in one H3-H4 heterotetramer and two H2A-H2B heterodimers. The octamer wraps approximately 147 bp of DNA.

The protein resides in the nucleus. Its subcellular location is the chromosome. Core component of nucleosome. Nucleosomes wrap and compact DNA into chromatin, limiting DNA accessibility to the cellular machineries which require DNA as a template. Histones thereby play a central role in transcription regulation, DNA repair, DNA replication and chromosomal stability. DNA accessibility is regulated via a complex set of post-translational modifications of histones, also called histone code, and nucleosome remodeling. In Homo sapiens (Human), this protein is Histone H2A-like 3.